The primary structure comprises 417 residues: Serine hydroxymethyltransferase 2 (417 aa).

(6S)-5,6,7,8-tetrahydrofolate contacts are provided by residues L121 and G125–L127. K230 carries the post-translational modification N6-(pyridoxal phosphate)lysine. Residue S355–F357 participates in (6S)-5,6,7,8-tetrahydrofolate binding.

Belongs to the SHMT family. Homodimer. The cofactor is pyridoxal 5'-phosphate.

It localises to the cytoplasm. The catalysed reaction is (6R)-5,10-methylene-5,6,7,8-tetrahydrofolate + glycine + H2O = (6S)-5,6,7,8-tetrahydrofolate + L-serine. The protein operates within one-carbon metabolism; tetrahydrofolate interconversion. It functions in the pathway amino-acid biosynthesis; glycine biosynthesis; glycine from L-serine: step 1/1. Catalyzes the reversible interconversion of serine and glycine with tetrahydrofolate (THF) serving as the one-carbon carrier. This reaction serves as the major source of one-carbon groups required for the biosynthesis of purines, thymidylate, methionine, and other important biomolecules. Also exhibits THF-independent aldolase activity toward beta-hydroxyamino acids, producing glycine and aldehydes, via a retro-aldol mechanism. The sequence is that of Serine hydroxymethyltransferase 2 from Pseudomonas savastanoi pv. phaseolicola (strain 1448A / Race 6) (Pseudomonas syringae pv. phaseolicola (strain 1448A / Race 6)).